A 290-amino-acid polypeptide reads, in one-letter code: Probable aquaporin PIP2-7 (290 aa).

The next 2 membrane-spanning stretches (helical) occupy residues 45–65 (ALIA…ATVI) and 79–99 (GVGY…LVYC). The short motif at 109-111 (NPA) is the NPA 1 element. Helical transmembrane passes span 128-148 (VLYV…VKGI), 168-188 (SAAG…YTVF), and 202-222 (IPVL…LATI). The short motif at 230 to 232 (NPA) is the NPA 2 element. The chain crosses the membrane as a helical span at residues 252–272 (IFWVGPVIGAFLAAAYHKLVL).

It belongs to the MIP/aquaporin (TC 1.A.8) family. PIP (TC 1.A.8.11) subfamily. As to expression, expressed in roots.

It localises to the cell membrane. Its function is as follows. Aquaporins facilitate the transport of water and small neutral solutes across cell membranes. The polypeptide is Probable aquaporin PIP2-7 (PIP2-7) (Oryza sativa subsp. japonica (Rice)).